The primary structure comprises 454 residues: Cobyrinate a,c-diamide synthase (454 aa).

The 196-residue stretch at 247–442 folds into the GATase cobBQ-type domain; it reads KIGIAMDSAF…IHAHWASNPN (196 aa). Cysteine 329 serves as the catalytic Nucleophile.

This sequence belongs to the CobB/CbiA family. The cofactor is Mg(2+).

The enzyme catalyses cob(II)yrinate + 2 L-glutamine + 2 ATP + 2 H2O = cob(II)yrinate a,c diamide + 2 L-glutamate + 2 ADP + 2 phosphate + 2 H(+). Its pathway is cofactor biosynthesis; adenosylcobalamin biosynthesis; cob(II)yrinate a,c-diamide from sirohydrochlorin (anaerobic route): step 10/10. In terms of biological role, catalyzes the ATP-dependent amidation of the two carboxylate groups at positions a and c of cobyrinate, using either L-glutamine or ammonia as the nitrogen source. The polypeptide is Cobyrinate a,c-diamide synthase (Leptospira interrogans serogroup Icterohaemorrhagiae serovar Lai (strain 56601)).